The sequence spans 293 residues: Pyridoxal 5'-phosphate synthase subunit PdxS (293 aa).

Asp23 contributes to the D-ribose 5-phosphate binding site. The Schiff-base intermediate with D-ribose 5-phosphate role is filled by Lys80. Gly152 contacts D-ribose 5-phosphate. D-glyceraldehyde 3-phosphate is bound at residue Arg164. Residues Gly213 and 234-235 (GS) contribute to the D-ribose 5-phosphate site.

This sequence belongs to the PdxS/SNZ family. In the presence of PdxT, forms a dodecamer of heterodimers.

It carries out the reaction aldehydo-D-ribose 5-phosphate + D-glyceraldehyde 3-phosphate + L-glutamine = pyridoxal 5'-phosphate + L-glutamate + phosphate + 3 H2O + H(+). It participates in cofactor biosynthesis; pyridoxal 5'-phosphate biosynthesis. Catalyzes the formation of pyridoxal 5'-phosphate from ribose 5-phosphate (RBP), glyceraldehyde 3-phosphate (G3P) and ammonia. The ammonia is provided by the PdxT subunit. Can also use ribulose 5-phosphate and dihydroxyacetone phosphate as substrates, resulting from enzyme-catalyzed isomerization of RBP and G3P, respectively. The sequence is that of Pyridoxal 5'-phosphate synthase subunit PdxS from Chloroflexus aurantiacus (strain ATCC 29366 / DSM 635 / J-10-fl).